Consider the following 261-residue polypeptide: Global transcriptional regulator CodY (261 aa).

Residues 1–159 (MANLLSKTRR…SSTVVGIQLL (159 aa)) form a GAF domain region. A DNA-binding region (H-T-H motif) is located at residues 207 to 226 (ASVIADRIGITRSVIVNALR).

This sequence belongs to the CodY family.

The protein resides in the cytoplasm. Its function is as follows. DNA-binding global transcriptional regulator which is involved in the adaptive response to starvation and acts by directly or indirectly controlling the expression of numerous genes in response to nutrient availability. During rapid exponential growth, CodY is highly active and represses genes whose products allow adaptation to nutrient depletion. The protein is Global transcriptional regulator CodY of Streptococcus mutans serotype c (strain ATCC 700610 / UA159).